The primary structure comprises 127 residues: Glycine cleavage system H protein (127 aa).

The Lipoyl-binding domain maps to Glu22 to Glu103. Lys63 is modified (N6-lipoyllysine).

It belongs to the GcvH family. As to quaternary structure, the glycine cleavage system is composed of four proteins: P, T, L and H. (R)-lipoate serves as cofactor.

Its function is as follows. The glycine cleavage system catalyzes the degradation of glycine. The H protein shuttles the methylamine group of glycine from the P protein to the T protein. The chain is Glycine cleavage system H protein from Alkaliphilus oremlandii (strain OhILAs) (Clostridium oremlandii (strain OhILAs)).